The sequence spans 252 residues: uncharacterized protein (252 aa).

The protein belongs to the LarE family.

This is an uncharacterized protein from Methanocaldococcus jannaschii (strain ATCC 43067 / DSM 2661 / JAL-1 / JCM 10045 / NBRC 100440) (Methanococcus jannaschii).